The chain runs to 169 residues: Orotate phosphoribosyltransferase (169 aa).

5-phospho-alpha-D-ribose 1-diphosphate is bound by residues R86, K90, H92, and E111–S119. Orotate-binding residues include T115 and R143.

Belongs to the purine/pyrimidine phosphoribosyltransferase family. PyrE subfamily. In terms of assembly, homodimer. The cofactor is Mg(2+).

It catalyses the reaction orotidine 5'-phosphate + diphosphate = orotate + 5-phospho-alpha-D-ribose 1-diphosphate. The protein operates within pyrimidine metabolism; UMP biosynthesis via de novo pathway; UMP from orotate: step 1/2. Functionally, catalyzes the transfer of a ribosyl phosphate group from 5-phosphoribose 1-diphosphate to orotate, leading to the formation of orotidine monophosphate (OMP). The chain is Orotate phosphoribosyltransferase from Methanocorpusculum labreanum (strain ATCC 43576 / DSM 4855 / Z).